A 512-amino-acid polypeptide reads, in one-letter code: Protein maelstrom homolog (512 aa).

Residues 9–75 (AKGPFYFFMM…NPKEAGGYGE (67 aa)) constitute a DNA-binding region (HMG box). Disordered stretches follow at residues 49-72 (APHE…EAGG), 360-421 (RMSK…GTRA), and 439-465 (QSAN…DPQS). The segment covering 360–370 (RMSKLTTTSDN) has biased composition (polar residues). Residues 379–388 (RSTDRTDRDV) are compositionally biased toward basic and acidic residues. 2 stretches are compositionally biased toward polar residues: residues 393–421 (IYSS…GTRA) and 439–449 (QSANRSPTKKN). Basic and acidic residues predominate over residues 451–464 (WSRENKLTEVRDPQ).

This sequence belongs to the maelstrom family.

It is found in the cytoplasm. The protein localises to the nucleus. In terms of biological role, plays a central role during gametogenesis by repressing transposable elements and preventing their mobilization, which is essential for the germline integrity. Probably acts via the piRNA metabolic process, which mediates the repression of transposable elements during meiosis by forming complexes composed of piRNAs and Piwi proteins and governs the repression of transposons. The sequence is that of Protein maelstrom homolog (mael) from Culex quinquefasciatus (Southern house mosquito).